Consider the following 307-residue polypeptide: ATP synthase gamma chain (307 aa).

This sequence belongs to the ATPase gamma chain family. In terms of assembly, F-type ATPases have 2 components, CF(1) - the catalytic core - and CF(0) - the membrane proton channel. CF(1) has five subunits: alpha(3), beta(3), gamma(1), delta(1), epsilon(1). CF(0) has three main subunits: a, b and c.

The protein resides in the cell membrane. Functionally, produces ATP from ADP in the presence of a proton gradient across the membrane. The gamma chain is believed to be important in regulating ATPase activity and the flow of protons through the CF(0) complex. This Mycolicibacterium smegmatis (strain ATCC 700084 / mc(2)155) (Mycobacterium smegmatis) protein is ATP synthase gamma chain.